Here is a 37-residue protein sequence, read N- to C-terminus: Diptericin (37 aa).

The disordered stretch occupies residues 1–37 (DLHIPPPDNKINWPQLSGGGGGSPKTGYDININAQQK).

The protein belongs to the attacin/sarcotoxin-2 family. Synthesized by the fat body and secreted into the hemolymph.

Its subcellular location is the secreted. Acute phase protein with antibacterial activity against the Gram-negative bacteria E.coli (MIC=6.25 ug/ml) and S.sonnei (MIC=12.5 ug/ml). Lacks antibacterial activity against the Gram-negative bacteria P.vulgaris, P.rettgeri and P.aeruginosa, and against the Gram-positive bacteria B.subtilis, S.aureus, M.luteus, B.megaterium, C.bovis and E.cloacae. This is Diptericin from Sarcophaga peregrina (Flesh fly).